Here is a 466-residue protein sequence, read N- to C-terminus: Ribulose bisphosphate carboxylase large chain (466 aa).

At Lys-5 the chain carries N6,N6,N6-trimethyllysine. Substrate-binding residues include Asn-114 and Thr-164. Lys-166 serves as the catalytic Proton acceptor. Lys-168 contributes to the substrate binding site. Positions 192, 194, and 195 each coordinate Mg(2+). Lys-192 carries the N6-carboxylysine modification. The active-site Proton acceptor is the His-285. Residues Arg-286, His-318, and Ser-370 each contribute to the substrate site.

Belongs to the RuBisCO large chain family. Type I subfamily. In terms of assembly, heterohexadecamer of 8 large chains and 8 small chains; disulfide-linked. The disulfide link is formed within the large subunit homodimers. Mg(2+) is required as a cofactor. In terms of processing, the disulfide bond which can form in the large chain dimeric partners within the hexadecamer appears to be associated with oxidative stress and protein turnover.

The protein resides in the plastid. Its subcellular location is the chloroplast. It catalyses the reaction 2 (2R)-3-phosphoglycerate + 2 H(+) = D-ribulose 1,5-bisphosphate + CO2 + H2O. The enzyme catalyses D-ribulose 1,5-bisphosphate + O2 = 2-phosphoglycolate + (2R)-3-phosphoglycerate + 2 H(+). Functionally, ruBisCO catalyzes two reactions: the carboxylation of D-ribulose 1,5-bisphosphate, the primary event in carbon dioxide fixation, as well as the oxidative fragmentation of the pentose substrate in the photorespiration process. Both reactions occur simultaneously and in competition at the same active site. This chain is Ribulose bisphosphate carboxylase large chain, found in Caltha palustris (Yellow marsh marigold).